A 339-amino-acid polypeptide reads, in one-letter code: uncharacterized protein (339 aa).

It to bacterial alkanal monooxygenase alpha and beta chains.

This is an uncharacterized protein from Bacillus subtilis (strain 168).